The primary structure comprises 498 residues: ATP synthase subunit beta, chloroplastic (498 aa).

172-179 is an ATP binding site; sequence GGAGVGKT.

This sequence belongs to the ATPase alpha/beta chains family. In terms of assembly, F-type ATPases have 2 components, CF(1) - the catalytic core - and CF(0) - the membrane proton channel. CF(1) has five subunits: alpha(3), beta(3), gamma(1), delta(1), epsilon(1). CF(0) has four main subunits: a(1), b(1), b'(1) and c(9-12).

Its subcellular location is the plastid. The protein resides in the chloroplast thylakoid membrane. The enzyme catalyses ATP + H2O + 4 H(+)(in) = ADP + phosphate + 5 H(+)(out). Its function is as follows. Produces ATP from ADP in the presence of a proton gradient across the membrane. The catalytic sites are hosted primarily by the beta subunits. This chain is ATP synthase subunit beta, chloroplastic, found in Coffea arabica (Arabian coffee).